The following is an 891-amino-acid chain: Nitrate reductase [NAD(P)H] (891 aa).

The interval 1-78 is disordered; it reads MAASVEYNRQ…VKDPRDEATS (78 aa). Residues 63-76 show a composition bias toward basic and acidic residues; sequence LDVEPSVKDPRDEA. A Mo-molybdopterin-binding site is contributed by Cys168. Positions 515–590 constitute a Cytochrome b5 heme-binding domain; it reads SAQFTMSEVR…LEMYRVGELI (76 aa). Heme-binding residues include His550 and His573. Residues 630-742 form the FAD-binding FR-type domain; that stretch reads REKVRCRLVD…KGPVGHIEYA (113 aa). Residues 682-685, 699-703, Phe704, Phe711, 716-718, and Thr769 each bind FAD; these read RAYT, LIKIY, and LMS.

This sequence belongs to the nitrate reductase family. Homodimer. FAD is required as a cofactor. It depends on heme as a cofactor. The cofactor is Mo-molybdopterin.

The catalysed reaction is nitrite + NAD(+) + H2O = nitrate + NADH + H(+). The enzyme catalyses nitrite + NADP(+) + H2O = nitrate + NADPH + H(+). Its function is as follows. Nitrate reductase is a key enzyme involved in the first step of nitrate assimilation in plants, fungi and bacteria. The chain is Nitrate reductase [NAD(P)H] (NAR-7) from Hordeum vulgare (Barley).